A 62-amino-acid chain; its full sequence is Photosystem II reaction center protein Z (62 aa).

2 helical membrane-spanning segments follow: residues 8-28 (ALFALVAISFILVVGVPVILA) and 41-61 (FSGASLWIFLVFVVGILNSFI).

Belongs to the PsbZ family. In terms of assembly, PSII is composed of 1 copy each of membrane proteins PsbA, PsbB, PsbC, PsbD, PsbE, PsbF, PsbH, PsbI, PsbJ, PsbK, PsbL, PsbM, PsbT, PsbY, PsbZ, Psb30/Ycf12, at least 3 peripheral proteins of the oxygen-evolving complex and a large number of cofactors. It forms dimeric complexes.

It is found in the plastid. It localises to the chloroplast thylakoid membrane. Functionally, may control the interaction of photosystem II (PSII) cores with the light-harvesting antenna, regulates electron flow through the 2 photosystem reaction centers. PSII is a light-driven water plastoquinone oxidoreductase, using light energy to abstract electrons from H(2)O, generating a proton gradient subsequently used for ATP formation. This is Photosystem II reaction center protein Z from Chara vulgaris (Common stonewort).